A 245-amino-acid polypeptide reads, in one-letter code: Myozenin-3 (245 aa).

The residue at position 31 (Ser31) is a Phosphoserine. The tract at residues 50 to 67 (LLFQKRQRRVQKFTFELS) is binding to ACTN2, PPP3CA and TCAP. The tract at residues 67 to 108 (SESLQAILASSARGKVAGRAAQATVPNGLEEQNHHSETHVFQ) is binding to FLNC. The interval 93 to 134 (NGLEEQNHHSETHVFQGSPGDPGITHLGAAGTGSVRSPSALA) is disordered. A binding to ACTN2 region spans residues 180 to 201 (PIPRDYRNFNKTPVPFGGPHVR).

The protein belongs to the myozenin family. As to quaternary structure, interacts with ACTN2, LDB3, FLNC, PPP3CA and TCAP. Expressed specifically in skeletal muscle and is enriched in fast-twitch muscle fibers. Not detected in heart.

The protein resides in the cytoplasm. It localises to the myofibril. It is found in the sarcomere. Its subcellular location is the z line. Myozenins may serve as intracellular binding proteins involved in linking Z line proteins such as alpha-actinin, gamma-filamin, TCAP/telethonin, LDB3/ZASP and localizing calcineurin signaling to the sarcomere. Plays an important role in the modulation of calcineurin signaling. May play a role in myofibrillogenesis. In Mus musculus (Mouse), this protein is Myozenin-3.